Consider the following 530-residue polypeptide: Estrogen receptor beta (530 aa).

A modulating region spans residues 1-148 (MEIKNSPSSL…SPNAKRDAHF (148 aa)). Serine 61 is subject to Phosphoserine; alternate. Serine 61 carries O-linked (GlcNAc) serine; alternate glycosylation. Phosphoserine; by MAPK is present on residues serine 87 and serine 105. 2 NR C4-type zinc fingers span residues 149 to 169 (CPVC…CEGC) and 185 to 209 (CPAT…LRKC). The nuclear receptor DNA-binding region spans 149–214 (CPVCSDYASG…RLRKCYEVGM (66 aa)). The region spanning 264–498 (SPEQLVLTLL…DLLLEMLNAH (235 aa)) is the NR LBD domain. Residues 506 to 515 (SISGSECSST) show a composition bias toward low complexity. Residues 506 to 530 (SISGSECSSTEDSKNKESSQNLQSQ) are disordered.

The protein belongs to the nuclear hormone receptor family. NR3 subfamily. In terms of assembly, binds DNA as a homodimer. Can form a heterodimer with ESR1. Interacts with NCOA1, NCOA3, NCOA5 and NCOA6 coactivators, leading to a strong increase of transcription of target genes. Interacts with UBE1C and AKAP13. Interacts with DNTTIP2. Interacts with CCDC62 in the presence of estradiol/E2; this interaction seems to enhance the transcription of target genes. Interacts with PRMT2. Interacts with CCAR2 (via N-terminus) in a ligand-independent manner. Interacts with DNAAF4. Interacts with RBM39, in the presence of estradiol (E2). Interacts with STUB1/CHIP. Phosphorylation at Ser-87 and Ser-105 recruits NCOA1. Expressed in the CA1 region of the hippocampus, expression decreases with age (at protein level). Expressed in prostate, ovary, lung, liver, kidney, fat, bone, brain, uterus and testis.

Its subcellular location is the nucleus. Its function is as follows. Nuclear hormone receptor. Binds estrogens with an affinity similar to that of ESR1/ER-alpha, and activates expression of reporter genes containing estrogen response elements (ERE) in an estrogen-dependent manner. Functionally, lacks ligand binding affinity and suppresses ESR1/ER-alpha and ESR2 isoform 1/ER-beta1 mediated transcriptional activation and may act as a dominant negative regulator of estrogen action. In terms of biological role, unable to bind DNA and activate transcription due to the truncation of the DNA binding domain. The sequence is that of Estrogen receptor beta (Esr2) from Rattus norvegicus (Rat).